Here is a 593-residue protein sequence, read N- to C-terminus: Early nodule-specific protein 2 (593 aa).

The span at 71–110 (EKPPIYEPPPTEEPPPVYKPPIIHPPPNYKPPAHTPPIYH) shows a compositional bias: pro residues. Residues 71 to 593 (EKPPIYEPPP…GHYPPYKKNQ (523 aa)) are disordered. Basic and acidic residues-rich tracts occupy residues 123–138 (PYEK…EYQP) and 166–195 (PPYE…EKPP). A compositionally biased stretch (pro residues) spans 196 to 210 (PEYTPPYEKPPPEYQ). 2 stretches are compositionally biased toward basic and acidic residues: residues 227–265 (PPHE…EKPP) and 275–292 (PPHE…EKPP). Pro residues predominate over residues 294–306 (VHPPPEYQPPYLK). Basic and acidic residues-rich tracts occupy residues 339–350 (PPHEKPPHEHPP), 360–372 (PPPE…ENPP), 382–394 (PPHE…EHPP), and 404–421 (PPPE…EHPP). Positions 422 to 435 (PEYQPPQENPPPEY) are enriched in pro residues. Residues 506–522 (PRHEKPMPKYQPPHEKL) are compositionally biased toward basic and acidic residues. Pro residues predominate over residues 532–558 (KTPPPQAYHPPPPIYHHPPFHPPPHVK).

It belongs to the nodulin 75 family.

Involved in early stages of root nodule development. This is Early nodule-specific protein 2 from Medicago truncatula (Barrel medic).